A 521-amino-acid polypeptide reads, in one-letter code: MGFKLKGFGFLTLFASQAFLTACSATLTVANTNHKNESDKFVIFEPQPPLSQTIPKPEAEPVIEPDAVATPPVQNAEVQIKPDSSKGVYSPGFKFNTNFIPKVNTKYRPGYDLSFALKFGTSWKEAYGTGWLIDWKDVKQDNKFTAYLATNLHVADSLRNKDDYKPYNKDGNQKEFLPGDITTEFSLGKYIDAQTVQKLTPEYQNLKHLNNRNSDALVSIQTSKLPKTAYTATDFIKTAQYKYNHIVSNTVYELDLFQNAVSYADFAVLELELNLANNRDQQIFDSFINPAVTAYEKLGNSLGLFSNLQLDQYVDDTHYLLGYPLLKREKTSYWNLPQKGYSSPLYENSNKEVSRITRNIRKDDEIPGSRLVQNQINYLPFAQNDPKGVMDFSKYLNYVFNYHEKQYQHHGYGLLLEDTDFPGGSSGSPLFNQNKQINSIYFAALPSKSYGVSQILRATQNKDKSKNYDLIFGDSNTKKYYAQFAKEHKTHLYHQILQSNDEQFRFVENDQTVTSQTPFKS.

An N-terminal signal peptide occupies residues 1–22 (MGFKLKGFGFLTLFASQAFLTA). Cysteine 23 carries the N-palmitoyl cysteine lipid modification. Residue cysteine 23 is the site of S-diacylglycerol cysteine attachment.

Belongs to the MG067/MG068/MG395 family.

It localises to the cell membrane. This is an uncharacterized protein from Mycoplasma pneumoniae (strain ATCC 29342 / M129 / Subtype 1) (Mycoplasmoides pneumoniae).